The primary structure comprises 368 residues: tRNA(Met) cytidine acetate ligase (368 aa).

ATP contacts are provided by residues 7 to 20 (IAEFNPFHNGHKYL), glycine 96, asparagine 152, and arginine 175.

The protein belongs to the TmcAL family.

It is found in the cytoplasm. The enzyme catalyses cytidine(34) in elongator tRNA(Met) + acetate + ATP = N(4)-acetylcytidine(34) in elongator tRNA(Met) + AMP + diphosphate. In terms of biological role, catalyzes the formation of N(4)-acetylcytidine (ac(4)C) at the wobble position of elongator tRNA(Met), using acetate and ATP as substrates. First activates an acetate ion to form acetyladenylate (Ac-AMP) and then transfers the acetyl group to tRNA to form ac(4)C34. This chain is tRNA(Met) cytidine acetate ligase, found in Streptococcus pyogenes serotype M1.